A 416-amino-acid polypeptide reads, in one-letter code: MANLEKKRVVVTGLGAITPIGNTLQDYWQGLMEGRNGIGPITRFDASDQACRFGGEVKDFDATQFLDRKEAKRMDRFCHFAVCASQQAINDAKLVINELNADEIGVLIGTGIGGLKVLEDQQTILLDKGPSRCSPFMIPMMIANMASGLTAINLGAKGPNNCTVTACAAGSNAIGDAFRLVQNGYAKAMICGGTEAAITPLSYAGFASARALSFRNDDPLHASRPFDKDRDGFVMGEGSGILILEELESALARGAKIYGEMVGYAMTCDAYHITAPVPDGRGATRAIAWALKDSGLKPEMVSYINAHGTSTPANDVTETRAIKQALGNHAYNIAVSSTKSMTGHLLGGSGGIEAVATVMAIAEDKVPPTINLENPDPECDLDYVPGQSRALIVDVALSNSFGFGGHNVTLAFKKYQ.

One can recognise a Ketosynthase family 3 (KS3) domain in the interval 6–414 (KKRVVVTGLG…GHNVTLAFKK (409 aa)). Residues cysteine 167, histidine 307, and histidine 344 each act as for beta-ketoacyl synthase activity in the active site.

The protein belongs to the thiolase-like superfamily. Beta-ketoacyl-ACP synthases family. In terms of assembly, homodimer.

It carries out the reaction a fatty acyl-[ACP] + malonyl-[ACP] + H(+) = a 3-oxoacyl-[ACP] + holo-[ACP] + CO2. The enzyme catalyses (9Z)-hexadecenoyl-[ACP] + malonyl-[ACP] + H(+) = 3-oxo-(11Z)-octadecenoyl-[ACP] + holo-[ACP] + CO2. The protein operates within lipid metabolism; fatty acid biosynthesis. In terms of biological role, involved in the type II fatty acid elongation cycle. Catalyzes the elongation of a wide range of acyl-ACP by the addition of two carbons from malonyl-ACP to an acyl acceptor. Can efficiently catalyze the conversion of palmitoleoyl-ACP (cis-hexadec-9-enoyl-ACP) to cis-vaccenoyl-ACP (cis-octadec-11-enoyl-ACP), an essential step in the thermal regulation of fatty acid composition. The sequence is that of 3-oxoacyl-[acyl-carrier-protein] synthase 2 (fabF) from Synechocystis sp. (strain ATCC 27184 / PCC 6803 / Kazusa).